A 206-amino-acid chain; its full sequence is Guanylate kinase (206 aa).

Positions 6–184 constitute a Guanylate kinase-like domain; that stretch reads GNLFILSAPS…ALTDIETIVM (179 aa). Residue 13–20 participates in ATP binding; that stretch reads APSGAGKS.

Belongs to the guanylate kinase family.

The protein resides in the cytoplasm. It catalyses the reaction GMP + ATP = GDP + ADP. Its function is as follows. Essential for recycling GMP and indirectly, cGMP. The polypeptide is Guanylate kinase (Pseudoalteromonas translucida (strain TAC 125)).